We begin with the raw amino-acid sequence, 440 residues long: Glucose-1-phosphate adenylyltransferase (440 aa).

Residues Tyr-125, Gly-190, 205–206 (EK), and Ser-223 each bind alpha-D-glucose 1-phosphate.

It belongs to the bacterial/plant glucose-1-phosphate adenylyltransferase family. Homotetramer.

The enzyme catalyses alpha-D-glucose 1-phosphate + ATP + H(+) = ADP-alpha-D-glucose + diphosphate. It participates in glycan biosynthesis; glycogen biosynthesis. In terms of biological role, involved in the biosynthesis of ADP-glucose, a building block required for the elongation reactions to produce glycogen. Catalyzes the reaction between ATP and alpha-D-glucose 1-phosphate (G1P) to produce pyrophosphate and ADP-Glc. The chain is Glucose-1-phosphate adenylyltransferase from Dechloromonas aromatica (strain RCB).